Consider the following 249-residue polypeptide: MTINRKPIFRRVLLKLSGEALMGDEGFGIDPKVLDRMAQEIKELVELDVEVGLVIGGGNFLRGGSLAEAGMNRVVGDHMGMLATVMNGLAMRDALHRAFVNCRLMSAIPLHGMCDAYNWAEAISLLKTGRVVIFAAGTGNPFFTTDSAACLRGIEIEADTVIKATKVDGVYSDDPVKNPDATLYRHLSYNEIIEKELKVMDLAAFTLARDHNMPLSVFNMNKSGALKRVIMGEEEGTLISSQASDEVIK.

Residue 15 to 18 (KLSG) coordinates ATP. Residues 23-28 (GDEGFG) form an involved in allosteric activation by GTP region. G57 serves as a coordination point for UMP. Residues G58 and R62 each coordinate ATP. UMP-binding positions include D77 and 138–145 (TGNPFFTT). Positions 165, 171, and 174 each coordinate ATP.

This sequence belongs to the UMP kinase family. As to quaternary structure, homohexamer.

The protein resides in the cytoplasm. The catalysed reaction is UMP + ATP = UDP + ADP. Its pathway is pyrimidine metabolism; CTP biosynthesis via de novo pathway; UDP from UMP (UMPK route): step 1/1. With respect to regulation, allosterically activated by GTP. Inhibited by UTP. Catalyzes the reversible phosphorylation of UMP to UDP. The sequence is that of Uridylate kinase from Pseudoalteromonas translucida (strain TAC 125).